Here is a 692-residue protein sequence, read N- to C-terminus: 5-taurinomethyluridine-[tRNA] synthase subunit MTO1, mitochondrial (692 aa).

The N-terminal 25 residues, 1–25 (MFYFRGCGRWVAASFTKLQFPLARL), are a transit peptide targeting the mitochondrion. FAD is bound by residues 43–48 (GGGHAG), V155, S218, and Q407. K508 carries the post-translational modification N6-methyllysine.

It belongs to the MnmG family. Homodimer; forms a dimer in the presence of potassium. Interacts with GTPBP3; forms the GTPBP3-MTO1 complex composed of homodimers of GTPBP3 and MTO1. FAD serves as cofactor.

It localises to the mitochondrion. The enzyme catalyses 5,10-methylenetetrahydrofolate + uridine(34) in tRNA + taurine + GTP + A + H2O = 5-taurinomethyluridine(34) in tRNA + 7,8-dihydrofolate + GDP + AH2 + phosphate + H(+). Component of the GTPBP3-MTO1 complex that catalyzes the 5-taurinomethyluridine (taum(5)U) modification at the 34th wobble position (U34) of mitochondrial tRNAs (mt-tRNAs), which plays a role in mt-tRNA decoding and mitochondrial translation. Taum(5)U formation on mammalian mt-tRNA requires the presence of both GTPBP3-mediated GTPase activity and MTO1 catalytic activity. This Pongo abelii (Sumatran orangutan) protein is 5-taurinomethyluridine-[tRNA] synthase subunit MTO1, mitochondrial (MTO1).